The following is a 622-amino-acid chain: SLAIN motif-containing protein-like (622 aa).

Residues 34 to 60 adopt a coiled-coil conformation; sequence DLKEVQKLHELVKRLEIQNQQLKIKRN. Disordered regions lie at residues 404–441 and 473–622; these read HRYSPSPLSSPRCQSPSAAESRATTSRIRPPRRSIQNH and VRSS…DGCY. Residues 405–415 show a composition bias toward low complexity; that stretch reads RYSPSPLSSPR. Polar residues-rich tracts occupy residues 416–430, 484–502, 525–591, and 599–611; these read CQSPSAAESRATTSR, QGPSSRLTRMQQPSTSTPP, VSTS…STVP, and SRRSLSSAKMNST.

It belongs to the SLAIN motif-containing family.

This chain is SLAIN motif-containing protein-like, found in Xenopus tropicalis (Western clawed frog).